We begin with the raw amino-acid sequence, 924 residues long: DNA repair and recombination protein RDH54 (924 aa).

Positions 1-10 (MQIPKYENKP) are enriched in basic and acidic residues. Disordered regions lie at residues 1–21 (MQIP…GSNK) and 155–182 (EALS…KNDG). Residues 168-178 (TTSTTETVPST) are compositionally biased toward low complexity. A Helicase ATP-binding domain is found at 299 to 487 (LENDSDISGC…FTIIDFINPG (189 aa)). 346–353 (IPLTGLCK) serves as a coordination point for ATP. The short motif at 472–475 (NDLN) is the DEGH box element. K615 is covalently cross-linked (Glycyl lysine isopeptide (Lys-Gly) (interchain with G-Cter in ubiquitin)). A Helicase C-terminal domain is found at 631–790 (KLRVLMTLLE…DSEMRNKESS (160 aa)).

This sequence belongs to the SNF2/RAD54 helicase family. As to quaternary structure, interacts with RAD51 and DMC1.

Its subcellular location is the nucleus. It catalyses the reaction ATP + H2O = ADP + phosphate + H(+). Its function is as follows. Involved in the recombinational repair of double-strand breaks (DSB) in DNA during mitosis and meiosis. Has DNA dependent ATPase activity. Promotes D-loop (displacement loop) formation with RAD51 recombinase. Modifies the topology of double-stranded DNA during the D-loop reaction to facilitate the invasion of the homologous duplex molecule by the initiating single-stranded DNA substrate. Required for adaptation from G2/M checkpoint arrest induced by a double strand break, by participating in monitoring the extent of single-stranded DNA produced by resection of DNA ends. This role is distinct from its roles in recombination. Promotes colocalization of RAD51 and DMC1 during meiotic recombination. Involved in crossover interference. The sequence is that of DNA repair and recombination protein RDH54 (RDH54) from Saccharomyces cerevisiae (strain AWRI1631) (Baker's yeast).